Here is a 222-residue protein sequence, read N- to C-terminus: Glutathione S-transferase A4 (222 aa).

The residue at position 1 (Met-1) is an N-acetylmethionine. One can recognise a GST N-terminal domain in the interval 3–83 (ARPKLHYPNG…YIADKHNLFG (81 aa)). Residues Tyr-9, 54 to 55 (QV), and 67 to 68 (QT) contribute to the glutathione site. The GST C-terminal domain maps to 85–208 (NLKERTLIDM…EPGSKKKPPP (124 aa)). Tyr-212 lines the substrate pocket.

It belongs to the GST superfamily. Alpha family. In terms of assembly, homodimer. In terms of tissue distribution, expressed at a high level in brain, placenta, and skeletal muscle and much lower in lung and liver.

Its subcellular location is the cytoplasm. It carries out the reaction RX + glutathione = an S-substituted glutathione + a halide anion + H(+). Its function is as follows. Conjugation of reduced glutathione to a wide number of exogenous and endogenous hydrophobic electrophiles. This isozyme has a high catalytic efficiency with 4-hydroxyalkenals such as 4-hydroxynonenal (4-HNE). This is Glutathione S-transferase A4 (GSTA4) from Homo sapiens (Human).